The following is a 602-amino-acid chain: Glutamyl-tRNA(Gln) amidotransferase subunit B, mitochondrial (602 aa).

The N-terminal 56 residues, 1–56, are a transit peptide targeting the mitochondrion; it reads MFRSCLRHCRRATVRSRTCPRCSHHEIPQLQVVQRQISLSSSFPHIRRLQTSSTDT.

It belongs to the GatB/GatE family. GatB subfamily. As to quaternary structure, subunit of the heterotrimeric GatCAB amidotransferase (AdT) complex, composed of A, B and C subunits.

Its subcellular location is the mitochondrion. The enzyme catalyses L-glutamyl-tRNA(Gln) + L-glutamine + ATP + H2O = L-glutaminyl-tRNA(Gln) + L-glutamate + ADP + phosphate + H(+). Functionally, allows the formation of correctly charged Gln-tRNA(Gln) through the transamidation of misacylated Glu-tRNA(Gln) in the mitochondria. The reaction takes place in the presence of glutamine and ATP through an activated gamma-phospho-Glu-tRNA(Gln). The polypeptide is Glutamyl-tRNA(Gln) amidotransferase subunit B, mitochondrial (nempA) (Emericella nidulans (strain FGSC A4 / ATCC 38163 / CBS 112.46 / NRRL 194 / M139) (Aspergillus nidulans)).